A 74-amino-acid chain; its full sequence is MMMTDLPENIRKTAVALLRLGEATAEDIAKITGRKRSTESYYLNLMADLKLVKKKKVGRKIYFIFNSRDQEKRQ.

An N-terminal signal peptide occupies residues 1–25 (MMMTDLPENIRKTAVALLRLGEATA).

This is an uncharacterized protein from Archaeoglobus fulgidus (strain ATCC 49558 / DSM 4304 / JCM 9628 / NBRC 100126 / VC-16).